Consider the following 149-residue polypeptide: Urease accessory protein UreE (149 aa).

It belongs to the UreE family.

It is found in the cytoplasm. Functionally, involved in urease metallocenter assembly. Binds nickel. Probably functions as a nickel donor during metallocenter assembly. The sequence is that of Urease accessory protein UreE from Prochlorococcus marinus (strain AS9601).